Here is a 204-residue protein sequence, read N- to C-terminus: UPF0637 protein Lm4b_01081 (204 aa).

The protein belongs to the UPF0637 family.

The chain is UPF0637 protein Lm4b_01081 from Listeria monocytogenes serotype 4b (strain CLIP80459).